Reading from the N-terminus, the 977-residue chain is Myb-like protein I (977 aa).

A disordered region spans residues 1 to 122; the sequence is MMNNQSMVRY…QQQQQQLDKS (122 aa). Over residues 21 to 39 the composition is skewed to pro residues; sequence PSPPVYSPIYRSPPPPPQP. Residues 52 to 68 show a composition bias toward basic and acidic residues; it reads DNSHHQVMDNSDHEQQQ. Positions 75–118 are enriched in low complexity; it reads QQQQQQQHHHQQQQQQQHHQQQQQQHHQQQQQHHHQQQQQQQQQ. Residues 167 to 222 enclose the HTH myb-type domain; it reads EKKKQSRYWTPEEHSRFIEALSKYGHKDVKSISQYVSTRNPTQVRTHAQKYFLRID. A DNA-binding region (H-T-H motif) is located at residues 195–218; sequence VKSISQYVSTRNPTQVRTHAQKYF. 5 disordered regions span residues 229-331, 422-516, 531-650, 738-853, and 872-960; these read LESK…SSPL, INNN…SSQP, NNNN…QQQM, LNSN…WPGP, and NYVP…GMNQ. The span at 241-252 shows a compositional bias: acidic residues; it reads KDDDWLREEYND. Over residues 254–275 the composition is skewed to polar residues; sequence GSPTQYSSCSNSPTTNSVANPF. Composition is skewed to low complexity over residues 276 to 329 and 422 to 504; these read SNSL…GNSS and INNN…INNN. Over residues 505–516 the composition is skewed to polar residues; sequence GPNSPNLLSSQP. Residues 738–754 show a composition bias toward low complexity; that stretch reads LNSNSGNSSPNISSING. Over residues 783–797 the composition is skewed to polar residues; it reads LSGSPSHSPAQSPHY. Low complexity-rich tracts occupy residues 798 to 848 and 887 to 943; these read NLNN…SHSI and SPHF…GSGS. Residues 944–960 show a composition bias toward polar residues; it reads WHQYQATDSPTGWGMNQ.

The protein resides in the nucleus. This Dictyostelium discoideum (Social amoeba) protein is Myb-like protein I (mybI).